We begin with the raw amino-acid sequence, 1437 residues long: IQ domain-containing protein N (1437 aa).

An IQ 1 domain is found at 84–112; sequence SRAATVIQASWKGYRLRQKLISQMTAAKA. 3 disordered regions span residues 332–353, 416–440, and 848–878; these read TSPT…SLSN, SQAQ…KPSP, and STGS…QNPR. Over residues 422–440 the composition is skewed to low complexity; it reads TVSTSSKTSPSSPTVKPSP. The span at 861–878 shows a compositional bias: polar residues; sequence AQPQLHSHAPNKTMQNPR. 5 consecutive IQ domains span residues 1190-1216, 1217-1239, 1240-1258, 1361-1389, and 1390-1413; these read QAVV…QWAT, IIQA…RATT, IIQA…ARQV, QHRA…SAAK, and MVQA…LGTG.

As to quaternary structure, interacts with calmodulin. In terms of tissue distribution, expressed in testis, in elongating spermatids (at protein level).

Functionally, essential for spermiogenesis and fertilization. May be required for manchette assembly in elongating spermatids. This is IQ domain-containing protein N (Iqcn) from Mus musculus (Mouse).